The primary structure comprises 528 residues: Protein spinster homolog 1 (528 aa).

Positions Met1–Gln44 are disordered. Helical transmembrane passes span Ile50–Leu70, Gly98–Leu118, Tyr126–Pro146, Val160–Val180, Met187–Ser207, Trp218–Val238, Leu278–Leu298, Leu323–Ile343, Leu357–Ala377, Ile381–Ile401, Phe421–Ile441, and Met465–Ile485. A Phosphoserine modification is found at Ser518.

The protein belongs to the major facilitator superfamily. Spinster (TC 2.A.1.49) family. In terms of assembly, interacts with BCL2 and BCL2L1.

Its subcellular location is the lysosome membrane. It catalyses the reaction a 1-acyl-sn-glycero-3-phosphocholine(out) + H(+)(out) = a 1-acyl-sn-glycero-3-phosphocholine(in) + H(+)(in). It carries out the reaction 1-hexadecanoyl-sn-glycero-3-phosphocholine(out) + H(+)(out) = 1-hexadecanoyl-sn-glycero-3-phosphocholine(in) + H(+)(in). The enzyme catalyses 1-(9Z-octadecenoyl)-sn-glycero-3-phosphocholine(out) + H(+)(out) = 1-(9Z-octadecenoyl)-sn-glycero-3-phosphocholine(in) + H(+)(in). The catalysed reaction is 1-(5Z,8Z,11Z,14Z-eicosatetraenoyl)-sn-glycero-3-phosphocholine(out) + H(+)(out) = 1-(5Z,8Z,11Z,14Z-eicosatetraenoyl)-sn-glycero-3-phosphocholine(in) + H(+)(in). It catalyses the reaction 1-(4Z,7Z,10Z,13Z,16Z,19Z-docosahexaenoyl)-sn-glycero-3-phosphocholine(out) + H(+)(out) = 1-(4Z,7Z,10Z,13Z,16Z,19Z-docosahexaenoyl)-sn-glycero-3-phosphocholine(in) + H(+)(in). It carries out the reaction a 1-acyl-sn-glycero-3-phosphoethanolamine(out) + H(+)(out) = a 1-acyl-sn-glycero-3-phosphoethanolamine(in) + H(+)(in). The enzyme catalyses 1-(9Z-octadecenoyl)-sn-glycero-3-phosphoethanolamine(out) + H(+)(out) = 1-(9Z-octadecenoyl)-sn-glycero-3-phosphoethanolamine(in) + H(+)(in). The catalysed reaction is 1-acyl-sn-glycero-3-phospho-(1'-sn-glycerol)(out) + H(+)(out) = 1-acyl-sn-glycero-3-phospho-(1'-sn-glycerol)(in) + H(+)(in). It catalyses the reaction 1-(9Z-octadecenoyl)-sn-glycero-3-phospho-(1'-sn-glycerol)(out) + H(+)(out) = 1-(9Z-octadecenoyl)-sn-glycero-3-phospho-(1'-sn-glycerol)(in) + H(+)(in). It carries out the reaction a 1-O-(1Z-alkenyl)-sn-glycero-3-phosphocholine(out) + H(+)(out) = a 1-O-(1Z-alkenyl)-sn-glycero-3-phosphocholine(in) + H(+)(in). The enzyme catalyses 1-(1Z-hexadecenyl)-sn-glycero-3-phosphocholine(out) + H(+)(out) = 1-(1Z-hexadecenyl)-sn-glycero-3-phosphocholine(in) + H(+)(in). The catalysed reaction is a 1-O-(1Z-alkenyl)-sn-glycero-3-phosphoethanolamine(out) + H(+)(out) = a 1-O-(1Z-alkenyl)-sn-glycero-3-phosphoethanolamine(in) + H(+)(in). It catalyses the reaction 1-O-(1Z-hexadecenyl)-sn-glycero-3-phosphoethanolamine(out) + H(+)(out) = 1-O-(1Z-hexadecenyl)-sn-glycero-3-phosphoethanolamine(in) + H(+)(in). Plays a critical role in the phospholipid salvage pathway from lysosomes to the cytosol. Mediates the rate-limiting, proton-dependent, lysosomal efflux of lysophospholipids, which can then be reacylated by acyltransferases in the endoplasmic reticulum to form phospholipids. Selective for zwitterionic headgroups such as lysophosphatidylcholine (LPC) and lysophosphatidylethanolamine (LPE), can also transport lysophosphatidylglycerol (LPG), but not other anionic lysophospholipids, sphingosine, nor sphingomyelin. Transports lysophospholipids with saturated, monounsaturated, and polyunsaturated fatty acids, such as 1-hexadecanoyl-sn-glycero-3-phosphocholine, 1-(9Z-octadecenoyl)-sn-glycero-3-phosphocholine and 1-(4Z,7Z,10Z,13Z,16Z,19Z-docosahexaenoyl)-sn-glycero-3-phosphocholine, respectively. Can also transport lysoplasmalogen (LPC with a fatty alcohol) such as 1-(1Z-hexadecenyl)-sn-glycero-3-phosphocholine. Essential player in lysosomal homeostasis. Crucial for cell survival under conditions of nutrient limitation. May be involved in necrotic or autophagic cell death. This is Protein spinster homolog 1 (SPNS1) from Bos taurus (Bovine).